The sequence spans 64 residues: Alpha-conotoxin-like Lp1.7 (64 aa).

Residues 1–21 form the signal peptide; that stretch reads MGMRMMFTMFLLVVLTTTVVS. Positions 22–41 are excised as a propeptide; the sequence is FNSDRESNHENRRTSNQITR. 2 cysteine pairs are disulfide-bonded: Cys47/Cys53 and Cys48/Cys61. A lacks the Ser-Xaa-Pro motif that is crucial for potent interaction with nAChR region spans residues 49-51; it reads DDP.

It belongs to the conotoxin A superfamily. As to expression, expressed by the venom duct.

Its subcellular location is the secreted. In terms of biological role, alpha-conotoxins act on postsynaptic membranes, they bind to the nicotinic acetylcholine receptors (nAChR) and thus inhibit them. Has possibly a distinct nAChR binding mode from other alpha-conotoxins, due to a different three residue motif (lacks the Ser-Xaa-Pro motif). The polypeptide is Alpha-conotoxin-like Lp1.7 (Conus leopardus (Leopard cone)).